Consider the following 608-residue polypeptide: Tectonic-3 (608 aa).

The signal sequence occupies residues methionine 1–proline 22. The segment at glutamine 23–proline 58 is disordered. The Extracellular portion of the chain corresponds to glutamine 23 to lysine 586. Residues glycine 45–threonine 54 are compositionally biased toward polar residues. N-linked (GlcNAc...) asparagine glycosylation is found at asparagine 78, asparagine 179, and asparagine 347. A helical transmembrane segment spans residues cysteine 587–threonine 607. Residue threonine 608 is a topological domain, cytoplasmic.

Belongs to the tectonic family. As to quaternary structure, part of the tectonic-like complex (also named B9 complex).

Its subcellular location is the membrane. Part of the tectonic-like complex which is required for tissue-specific ciliogenesis and may regulate ciliary membrane composition. May be involved in apoptosis regulation. Necessary for signal transduction through the sonic hedgehog (Shh) signaling pathway. The polypeptide is Tectonic-3 (TCTN3) (Macaca fascicularis (Crab-eating macaque)).